Consider the following 374-residue polypeptide: LIM domain-binding protein 1-A (374 aa).

Disordered regions lie at residues 1 to 24, 249 to 297, and 322 to 374; these read MLDR…IGRH, PPAE…ALSS, and TRLE…QSSQ. The span at 267–297 shows a compositional bias: low complexity; sequence SGGSTMSSGGGNNNNSNSKKKSPASSFALSS. One can recognise an LIM interaction domain (LID) domain in the interval 299-338; it reads DVMVVGEPTLMGGEFGDEDERLITRLENTQFDAANGIDDE. The span at 341-374 shows a compositional bias: polar residues; sequence FNSSPTMGTNSPWNSKAPSSQQGKNDNPSSQSSQ.

This sequence belongs to the LDB family. As to expression, expressed ubiquitously in the embryo and adult.

It is found in the nucleus. Functionally, binds to the LIM domain of a wide variety of LIM domain-containing transcription factors. In Danio rerio (Zebrafish), this protein is LIM domain-binding protein 1-A (ldb1a).